A 438-amino-acid polypeptide reads, in one-letter code: Chromosomal replication initiator protein DnaA (438 aa).

Positions 1 to 68 are domain I, interacts with DnaA modulators; sequence MKDNILSALK…VVKESLGKDA (68 aa). Residues 68-98 form a domain II region; sequence ATFEIVYKEIDITQENEEKGPLVRKRPLLIT. The segment at 99 to 314 is domain III, AAA+ region; it reads PLNPKYTFEN…GAILKLIAYK (216 aa). ATP-binding residues include Gly142, Gly144, Lys145, and Thr146. A domain IV, binds dsDNA region spans residues 315 to 438; that stretch reads NLYGSLNLSI…TKNFAQGESI (124 aa).

This sequence belongs to the DnaA family. Oligomerizes as a right-handed, spiral filament on DNA at oriC.

It localises to the cytoplasm. Its function is as follows. Plays an essential role in the initiation and regulation of chromosomal replication. ATP-DnaA binds to the origin of replication (oriC) to initiate formation of the DNA replication initiation complex once per cell cycle. Binds the DnaA box (a 9 base pair repeat at the origin) and separates the double-stranded (ds)DNA. Forms a right-handed helical filament on oriC DNA; dsDNA binds to the exterior of the filament while single-stranded (ss)DNA is stabiized in the filament's interior. The ATP-DnaA-oriC complex binds and stabilizes one strand of the AT-rich DNA unwinding element (DUE), permitting loading of DNA polymerase. After initiation quickly degrades to an ADP-DnaA complex that is not apt for DNA replication. Binds acidic phospholipids. In Thermosipho africanus (strain TCF52B), this protein is Chromosomal replication initiator protein DnaA.